Here is a 171-residue protein sequence, read N- to C-terminus: Thioredoxin-2 (171 aa).

The region spanning 41–169 (AFNASPSTSQ…LQALISANHP (129 aa)) is the Thioredoxin domain. A disulfide bond links Cys-95 and Cys-98.

The protein belongs to the thioredoxin family.

It localises to the cytoplasm. The protein localises to the vacuole. In terms of biological role, thioredoxin involved in responses to oxidative and cell wall stresses. Plays an important role in appressorium formation on hyphal tips. TRX2 may affect invasive growth via the MST11-MST7-PMK1 pathway since it is required for the proper folding or dimerization of MAPKK MST7. The sequence is that of Thioredoxin-2 from Pyricularia oryzae (strain 70-15 / ATCC MYA-4617 / FGSC 8958) (Rice blast fungus).